The primary structure comprises 121 residues: Small ribosomal subunit protein uS13 (121 aa).

The segment at 91 to 121 (HKRGLPVRGQRTRTNARTRKGPRRAAASLKK) is disordered.

The protein belongs to the universal ribosomal protein uS13 family. In terms of assembly, part of the 30S ribosomal subunit. Forms a loose heterodimer with protein S19. Forms two bridges to the 50S subunit in the 70S ribosome.

Functionally, located at the top of the head of the 30S subunit, it contacts several helices of the 16S rRNA. In the 70S ribosome it contacts the 23S rRNA (bridge B1a) and protein L5 of the 50S subunit (bridge B1b), connecting the 2 subunits; these bridges are implicated in subunit movement. Contacts the tRNAs in the A and P-sites. The sequence is that of Small ribosomal subunit protein uS13 from Bordetella petrii (strain ATCC BAA-461 / DSM 12804 / CCUG 43448).